A 336-amino-acid polypeptide reads, in one-letter code: Dihydroorotate dehydrogenase (quinone) (336 aa).

FMN contacts are provided by residues 62–66 (AGLDK) and threonine 86. Lysine 66 serves as a coordination point for substrate. Substrate is bound at residue 111–115 (NRMGF). Positions 139 and 172 each coordinate FMN. Asparagine 172 contacts substrate. The active-site Nucleophile is serine 175. Asparagine 177 serves as a coordination point for substrate. Residues lysine 217 and threonine 245 each contribute to the FMN site. 246–247 (NT) is a binding site for substrate. FMN contacts are provided by residues glycine 268, glycine 297, and 318 to 319 (YS).

The protein belongs to the dihydroorotate dehydrogenase family. Type 2 subfamily. In terms of assembly, monomer. FMN serves as cofactor.

The protein localises to the cell membrane. The enzyme catalyses (S)-dihydroorotate + a quinone = orotate + a quinol. Its pathway is pyrimidine metabolism; UMP biosynthesis via de novo pathway; orotate from (S)-dihydroorotate (quinone route): step 1/1. Functionally, catalyzes the conversion of dihydroorotate to orotate with quinone as electron acceptor. The protein is Dihydroorotate dehydrogenase (quinone) of Escherichia coli (strain UTI89 / UPEC).